We begin with the raw amino-acid sequence, 882 residues long: Alanine--tRNA ligase (882 aa).

Residues histidine 568, histidine 572, cysteine 670, and histidine 674 each coordinate Zn(2+).

Belongs to the class-II aminoacyl-tRNA synthetase family. It depends on Zn(2+) as a cofactor.

The protein localises to the cytoplasm. The enzyme catalyses tRNA(Ala) + L-alanine + ATP = L-alanyl-tRNA(Ala) + AMP + diphosphate. Catalyzes the attachment of alanine to tRNA(Ala) in a two-step reaction: alanine is first activated by ATP to form Ala-AMP and then transferred to the acceptor end of tRNA(Ala). Also edits incorrectly charged Ser-tRNA(Ala) and Gly-tRNA(Ala) via its editing domain. In Syntrophotalea carbinolica (strain DSM 2380 / NBRC 103641 / GraBd1) (Pelobacter carbinolicus), this protein is Alanine--tRNA ligase.